A 701-amino-acid polypeptide reads, in one-letter code: DUF724 domain-containing protein 6 (701 aa).

Disordered regions lie at residues 299–353 (MKTK…KRAN) and 374–452 (VEPV…DESC). Residues 326–340 (LNLEKSAETLTKAES) are compositionally biased toward basic and acidic residues. Residues 381–399 (RVRTATPLKQTKADTQGKS) show a composition bias toward polar residues. 3 stretches are compositionally biased toward basic and acidic residues: residues 403–412 (KTLEPMRDEN), 421–430 (KVLEEKNSEK), and 437–449 (RQEE…KETD). A DUF724 domain is found at 514–700 (LPFAKKSPFW…LEFQSTASAP (187 aa)). A coiled-coil region spans residues 626–670 (LEKKIEAGEIEGHTYEEEMAELELKILELKRQQVVAKEMKEATDK).

In terms of tissue distribution, expressed in roots, stems and flowers.

The protein localises to the nucleus. In terms of biological role, may be involved in the polar growth of plant cells via transportation of RNAs. In Arabidopsis thaliana (Mouse-ear cress), this protein is DUF724 domain-containing protein 6.